The following is a 237-amino-acid chain: Ribosomal RNA small subunit methyltransferase G (237 aa).

Residues glycine 78, phenylalanine 83, 129–130 (AE), and arginine 148 each bind S-adenosyl-L-methionine.

It belongs to the methyltransferase superfamily. RNA methyltransferase RsmG family.

It is found in the cytoplasm. Specifically methylates the N7 position of a guanine in 16S rRNA. In Streptococcus pyogenes serotype M49 (strain NZ131), this protein is Ribosomal RNA small subunit methyltransferase G.